We begin with the raw amino-acid sequence, 284 residues long: Bifunctional protein FolD (284 aa).

Residues 164–166 (GRS) and Ser-189 each bind NADP(+).

It belongs to the tetrahydrofolate dehydrogenase/cyclohydrolase family. In terms of assembly, homodimer.

The catalysed reaction is (6R)-5,10-methylene-5,6,7,8-tetrahydrofolate + NADP(+) = (6R)-5,10-methenyltetrahydrofolate + NADPH. It carries out the reaction (6R)-5,10-methenyltetrahydrofolate + H2O = (6R)-10-formyltetrahydrofolate + H(+). It functions in the pathway one-carbon metabolism; tetrahydrofolate interconversion. In terms of biological role, catalyzes the oxidation of 5,10-methylenetetrahydrofolate to 5,10-methenyltetrahydrofolate and then the hydrolysis of 5,10-methenyltetrahydrofolate to 10-formyltetrahydrofolate. This is Bifunctional protein FolD from Listeria monocytogenes serotype 4b (strain F2365).